Consider the following 157-residue polypeptide: DNA gyrase inhibitor 2 (157 aa).

The protein belongs to the DNA gyrase inhibitor family. In terms of assembly, interacts with DNA gyrase.

Its subcellular location is the cytoplasm. Functionally, inhibits the supercoiling activity of DNA gyrase. Acts by inhibiting DNA gyrase at an early step, prior to (or at the step of) binding of DNA by the gyrase. It protects cells against toxins that target DNA gyrase, by inhibiting activity of these toxins and reducing the formation of lethal double-strand breaks in the cell. The chain is DNA gyrase inhibitor 2 from Dickeya dadantii (strain 3937) (Erwinia chrysanthemi (strain 3937)).